The primary structure comprises 39 residues: Colipase (39 aa).

Cystine bridges form between Cys16/Cys27 and Cys22/Cys38.

Belongs to the colipase family. In terms of assembly, forms a 1:1 stoichiometric complex with pancreatic lipase. As to expression, expressed by the pancreas.

It is found in the secreted. Its function is as follows. Colipase is a cofactor of pancreatic lipase. It allows the lipase to anchor itself to the lipid-water interface. Without colipase the enzyme is washed off by bile salts, which have an inhibitory effect on the lipase. The polypeptide is Colipase (Squalus acanthias (Spiny dogfish)).